Consider the following 265-residue polypeptide: Phosphatidylserine decarboxylase proenzyme (265 aa).

Active-site charge relay system; for autoendoproteolytic cleavage activity residues include D86, H142, and S226. The Schiff-base intermediate with substrate; via pyruvic acid; for decarboxylase activity role is filled by S226. Residue S226 is modified to Pyruvic acid (Ser); by autocatalysis.

The protein belongs to the phosphatidylserine decarboxylase family. PSD-B subfamily. Prokaryotic type I sub-subfamily. In terms of assembly, heterodimer of a large membrane-associated beta subunit and a small pyruvoyl-containing alpha subunit. Pyruvate is required as a cofactor. In terms of processing, is synthesized initially as an inactive proenzyme. Formation of the active enzyme involves a self-maturation process in which the active site pyruvoyl group is generated from an internal serine residue via an autocatalytic post-translational modification. Two non-identical subunits are generated from the proenzyme in this reaction, and the pyruvate is formed at the N-terminus of the alpha chain, which is derived from the carboxyl end of the proenzyme. The autoendoproteolytic cleavage occurs by a canonical serine protease mechanism, in which the side chain hydroxyl group of the serine supplies its oxygen atom to form the C-terminus of the beta chain, while the remainder of the serine residue undergoes an oxidative deamination to produce ammonia and the pyruvoyl prosthetic group on the alpha chain. During this reaction, the Ser that is part of the protease active site of the proenzyme becomes the pyruvoyl prosthetic group, which constitutes an essential element of the active site of the mature decarboxylase.

It localises to the cell membrane. It carries out the reaction a 1,2-diacyl-sn-glycero-3-phospho-L-serine + H(+) = a 1,2-diacyl-sn-glycero-3-phosphoethanolamine + CO2. It functions in the pathway phospholipid metabolism; phosphatidylethanolamine biosynthesis; phosphatidylethanolamine from CDP-diacylglycerol: step 2/2. Functionally, catalyzes the formation of phosphatidylethanolamine (PtdEtn) from phosphatidylserine (PtdSer). The sequence is that of Phosphatidylserine decarboxylase proenzyme from Anoxybacillus flavithermus (strain DSM 21510 / WK1).